Reading from the N-terminus, the 186-residue chain is NADH-quinone oxidoreductase subunit B (186 aa).

C44, C45, C110, and C139 together coordinate [4Fe-4S] cluster.

It belongs to the complex I 20 kDa subunit family. NDH-1 is composed of 14 different subunits. Subunits NuoB, C, D, E, F, and G constitute the peripheral sector of the complex. [4Fe-4S] cluster serves as cofactor.

It is found in the cell inner membrane. The catalysed reaction is a quinone + NADH + 5 H(+)(in) = a quinol + NAD(+) + 4 H(+)(out). Its function is as follows. NDH-1 shuttles electrons from NADH, via FMN and iron-sulfur (Fe-S) centers, to quinones in the respiratory chain. The immediate electron acceptor for the enzyme in this species is believed to be ubiquinone. Couples the redox reaction to proton translocation (for every two electrons transferred, four hydrogen ions are translocated across the cytoplasmic membrane), and thus conserves the redox energy in a proton gradient. The polypeptide is NADH-quinone oxidoreductase subunit B (Leptospira borgpetersenii serovar Hardjo-bovis (strain JB197)).